The sequence spans 499 residues: Increased recombination centers protein 15 (499 aa).

47-56 serves as a coordination point for FAD; sequence DQRASLGGAY.

Belongs to the class-I pyridine nucleotide-disulfide oxidoreductase family.

The protein localises to the cytoplasm. This Saccharomyces cerevisiae (strain ATCC 204508 / S288c) (Baker's yeast) protein is Increased recombination centers protein 15 (IRC15).